Here is a 541-residue protein sequence, read N- to C-terminus: Protein wntless homolog B (541 aa).

Over 1-15 (MAGAIIENMSTKKLC) the chain is Cytoplasmic. The chain crosses the membrane as a helical span at residues 16–36 (MVGVALLLLQVLAFLVGGLIA). The Lumenal segment spans residues 37-232 (PKPTTYVNPV…SIFQNGGFTM (196 aa)). Residues 233 to 253 (VWFAMKTFLTPCIIIIMIWYW) traverse the membrane as a helical segment. Residues 254–268 (RRITMMTRSPVLLEK) lie on the Cytoplasmic side of the membrane. A helical transmembrane segment spans residues 269 to 289 (VIFALGISMTFINIPVEWFSI). The Lumenal segment spans residues 290–303 (GYDWTWMLLFGDIR). The helical transmembrane segment at 304 to 324 (QGIFYAMLLSFWIIFCGEHMM) threads the bilayer. Over 325–331 (DQAERNR) the chain is Cytoplasmic. A helical membrane pass occupies residues 332–352 (ISIYWKQVGPIAFGSCCLFIF). Topologically, residues 353–379 (DMCERGVQLKNPFYSIWTTDVGAEIAM) are lumenal. The helical transmembrane segment at 380–400 (AFIIVAGICACLYFLFLCFMV) threads the bilayer. At 401 to 431 (YQVFRNISGKRSNLPAMSKARRLHYEGLIFR) the chain is on the cytoplasmic side. The chain crosses the membrane as a helical span at residues 432–452 (FKFLMIITLACAALTVVFFIT). The Lumenal segment spans residues 453–471 (TQITEGNWKLGDLSIELNS). A helical membrane pass occupies residues 472-492 (AFFTGIYGMWNLYVFALMFLY). Over 493 to 541 (APSHKHYGDGQSNDGAGMSSGEELQLTTTITHIDGPTELYRLAGKEAQE) the chain is Cytoplasmic.

This sequence belongs to the wntless family. As to expression, enriched in the animal hemisphere of the early cleavage embryo, where expression persists until the late gastrula stage. At the neurula stage, strongly expressed at the border of the neural plate and dorsal midline. After the neurula stage, expressed in various organs, including the eye, liver, heart, pronephros, otic vesicle, and dorsal neural tube. Expression in the developing eye is dynamic; expressed in the eye field from stages 23 to 27, and from stage 30 expression is confined to distinct regions including the central part and border of the eye.

The protein resides in the golgi apparatus membrane. The protein localises to the cytoplasmic vesicle membrane. Functionally, required for a subset of Wnt-dependent developmental processes, in particular, eye and pronephros development. Regulates the secretion of wnt4, which is required for eye development. The polypeptide is Protein wntless homolog B (wls-b) (Xenopus laevis (African clawed frog)).